We begin with the raw amino-acid sequence, 251 residues long: uncharacterized protein (251 aa).

This is an uncharacterized protein from Caenorhabditis elegans.